We begin with the raw amino-acid sequence, 308 residues long: D-alanine--D-alanine ligase (308 aa).

The ATP-grasp domain maps to 102–302; sequence KTVAKSAGIP…FGALLSWMVE (201 aa). ATP is bound at residue 128–183; it reads PMEPPYVVKPVAEGSSFGVVIVREGQSHPPQVLGSAEWGYGERVMVERYIPGRELT. The Mg(2+) site is built by aspartate 252, glutamate 269, and asparagine 271.

This sequence belongs to the D-alanine--D-alanine ligase family. It depends on Mg(2+) as a cofactor. Requires Mn(2+) as cofactor.

The protein resides in the cytoplasm. The catalysed reaction is 2 D-alanine + ATP = D-alanyl-D-alanine + ADP + phosphate + H(+). Its pathway is cell wall biogenesis; peptidoglycan biosynthesis. In terms of biological role, cell wall formation. In Chelativorans sp. (strain BNC1), this protein is D-alanine--D-alanine ligase.